Consider the following 328-residue polypeptide: Tetraacyldisaccharide 4'-kinase (328 aa).

Residue 55–62 participates in ATP binding; that stretch reads TAGGNGKT.

It belongs to the LpxK family.

The enzyme catalyses a lipid A disaccharide + ATP = a lipid IVA + ADP + H(+). It functions in the pathway glycolipid biosynthesis; lipid IV(A) biosynthesis; lipid IV(A) from (3R)-3-hydroxytetradecanoyl-[acyl-carrier-protein] and UDP-N-acetyl-alpha-D-glucosamine: step 6/6. Its function is as follows. Transfers the gamma-phosphate of ATP to the 4'-position of a tetraacyldisaccharide 1-phosphate intermediate (termed DS-1-P) to form tetraacyldisaccharide 1,4'-bis-phosphate (lipid IVA). This is Tetraacyldisaccharide 4'-kinase from Escherichia coli O45:K1 (strain S88 / ExPEC).